Here is a 196-residue protein sequence, read N- to C-terminus: UMP-CMP kinase (196 aa).

Position 13-18 (13-18 (GAGKGT)) interacts with ATP. The segment at 33-63 (SAGDLLRDERKRPGSQYGELIENYIKEGEIV) is NMP. A ribonucleoside 5'-phosphate contacts are provided by residues Arg39, 61-63 (EIV), and 93-96 (GFPR). Asn100 provides a ligand contact to CMP. Residues 133 to 143 (ERGKSSGRSDD) form an LID region. Arg134 is a binding site for ATP. Arg140 and Arg151 together coordinate a ribonucleoside 5'-phosphate. Lys179 lines the ATP pocket.

This sequence belongs to the adenylate kinase family. UMP-CMP kinase subfamily. Monomer. Mg(2+) serves as cofactor.

It localises to the nucleus. It is found in the cytoplasm. It carries out the reaction CMP + ATP = CDP + ADP. The enzyme catalyses dCMP + ATP = dCDP + ADP. It catalyses the reaction UMP + ATP = UDP + ADP. The catalysed reaction is a 2'-deoxyribonucleoside 5'-diphosphate + ATP = a 2'-deoxyribonucleoside 5'-triphosphate + ADP. It carries out the reaction a ribonucleoside 5'-diphosphate + ATP = a ribonucleoside 5'-triphosphate + ADP. Its function is as follows. Catalyzes the phosphorylation of pyrimidine nucleoside monophosphates at the expense of ATP. Plays an important role in de novo pyrimidine nucleotide biosynthesis. Has preference for UMP and CMP as phosphate acceptors. Also displays broad nucleoside diphosphate kinase activity. This Gallus gallus (Chicken) protein is UMP-CMP kinase (CMPK).